The chain runs to 638 residues: Poly(A)-specific ribonuclease PARN (638 aa).

D28 and E30 together coordinate a divalent metal cation. Residues 143–165 are disordered; sequence REQYDEKRSQSNGAGALSYTSPN. The segment covering 152–165 has biased composition (polar residues); sequence QSNGAGALSYTSPN. Phosphoserine occurs at positions 163 and 167. In terms of domain architecture, R3H spans 178 to 245; it reads KKFIDQVVEK…ERYIVISKVD (68 aa). Residue K220 is modified to N6-acetyllysine. Positions 292 and 382 each coordinate a divalent metal cation. K499 is subject to N6-acetyllysine. At S530 the chain carries Phosphoserine. The residue at position 557 (S557) is a Phosphoserine; by MAPKAPK2. Residues 573 to 638 form a disordered region; it reads RAEAGLEARA…AKLFEVPDTW (66 aa). Phosphoserine occurs at positions 583 and 587. Residues 606–615 are compositionally biased toward basic residues; sequence KKAKKLKRMK. Residues S619, S623, and S627 each carry the phosphoserine modification.

The protein belongs to the CAF1 family. As to quaternary structure, homodimer. Found in a mRNA decay complex with RENT1, RENT2 and RENT3B. Interacts with KHSRP. Interacts with CELF1/CUGBP1. Interacts with ZC3HAV1 in an RNA-independent manner. Interacts with DHX36. Requires Mg(2+) as cofactor. In terms of processing, phosphorylation by MAPKAPK2, preventing GADD45A mRNA degradation after genotoxic stress.

It is found in the nucleus. The protein resides in the cytoplasm. The protein localises to the nucleolus. The enzyme catalyses Exonucleolytic cleavage of poly(A) to 5'-AMP.. In terms of biological role, 3'-exoribonuclease that has a preference for poly(A) tails of mRNAs, thereby efficiently degrading poly(A) tails. Exonucleolytic degradation of the poly(A) tail is often the first step in the decay of eukaryotic mRNAs and is also used to silence certain maternal mRNAs translationally during oocyte maturation and early embryonic development. Involved in nonsense-mediated mRNA decay, a critical process of selective degradation of mRNAs that contain premature stop codons. Also involved in degradation of inherently unstable mRNAs that contain AU-rich elements (AREs) in their 3'-UTR, possibly via its interaction with KHSRP. Probably mediates the removal of poly(A) tails of AREs mRNAs, which constitutes the first step of destabilization. Interacts with both the 3'-end poly(A) tail and the 5'-end cap structure during degradation, the interaction with the cap structure being required for an efficient degradation of poly(A) tails. Also able to recognize poly(A) tails of microRNAs such as MIR21 and H/ACA box snoRNAs (small nucleolar RNAs) leading to microRNAs degradation or snoRNA increased stability. The chain is Poly(A)-specific ribonuclease PARN (PARN) from Bos taurus (Bovine).